A 366-amino-acid chain; its full sequence is MSGNTLGTLFTVTTFGESHGPAIGCVIDGCPPGMALNEADIQFELDRRKPGTSRHVTQRQEEDKVEILSGVFEGQTTGAPIALLIRNTDQRSKDYGNIADTFRPGHADYTYWQKYGIRDYRGGGRSSARLTAPTVAAGAVAKKWLREKFGTEIHGYMAALGEIDVPFVDWAHVRENPFFAPNAQIVPQLETYMDALRKDGDSIGARINVVASGVPVGLGEPLFDRLDADIAHAMMGINAVKGVEIGAGFASIAQRGSVHGDELTPEGFVGNHAGGVLGGISTGQDVTVSIAIKPTSSIRTPRRSIDKAGQPVVVETFGRHDPCVGIRATPIAESMLALVLIDHALRHRAQCGDVAVSTPKIAASAP.

2 residues coordinate NADP(+): arginine 48 and arginine 54. FMN-binding positions include 125 to 127, 238 to 239, glycine 278, 293 to 297, and arginine 319; these read RSS, NA, and KPTSS.

The protein belongs to the chorismate synthase family. As to quaternary structure, homotetramer. Requires FMNH2 as cofactor.

It catalyses the reaction 5-O-(1-carboxyvinyl)-3-phosphoshikimate = chorismate + phosphate. The protein operates within metabolic intermediate biosynthesis; chorismate biosynthesis; chorismate from D-erythrose 4-phosphate and phosphoenolpyruvate: step 7/7. In terms of biological role, catalyzes the anti-1,4-elimination of the C-3 phosphate and the C-6 proR hydrogen from 5-enolpyruvylshikimate-3-phosphate (EPSP) to yield chorismate, which is the branch point compound that serves as the starting substrate for the three terminal pathways of aromatic amino acid biosynthesis. This reaction introduces a second double bond into the aromatic ring system. The polypeptide is Chorismate synthase (Paraburkholderia phytofirmans (strain DSM 17436 / LMG 22146 / PsJN) (Burkholderia phytofirmans)).